Here is a 185-residue protein sequence, read N- to C-terminus: uncharacterized protein (185 aa).

Residues 39 to 177 (LWHASAGVLV…SWPFVPDSRA (139 aa)) form the Nudix hydrolase domain. A Nudix box motif is present at residues 77–99 (GGVVDPGETPQETAIREVGEELG). Positions 93 and 97 each coordinate Mg(2+).

It belongs to the Nudix hydrolase family. Requires Mg(2+) as cofactor.

This is an uncharacterized protein from Rhodococcus erythropolis (Arthrobacter picolinophilus).